The chain runs to 274 residues: NH(3)-dependent NAD(+) synthetase (274 aa).

46–53 provides a ligand contact to ATP; it reads GISGGQDS. Residue Asp-52 participates in Mg(2+) binding. Deamido-NAD(+) is bound at residue Arg-140. Thr-160 is a binding site for ATP. Position 165 (Glu-165) interacts with Mg(2+). Residues Lys-173 and Asp-180 each contribute to the deamido-NAD(+) site. Residues Lys-189 and Thr-211 each coordinate ATP. 260 to 261 contacts deamido-NAD(+); sequence HK.

Belongs to the NAD synthetase family. Homodimer.

The enzyme catalyses deamido-NAD(+) + NH4(+) + ATP = AMP + diphosphate + NAD(+) + H(+). It participates in cofactor biosynthesis; NAD(+) biosynthesis; NAD(+) from deamido-NAD(+) (ammonia route): step 1/1. Its function is as follows. Catalyzes the ATP-dependent amidation of deamido-NAD to form NAD. Uses ammonia as a nitrogen source. In Streptococcus mutans serotype c (strain ATCC 700610 / UA159), this protein is NH(3)-dependent NAD(+) synthetase.